Here is a 116-residue protein sequence, read N- to C-terminus: Large ribosomal subunit protein bL20 (116 aa).

It belongs to the bacterial ribosomal protein bL20 family.

In terms of biological role, binds directly to 23S ribosomal RNA and is necessary for the in vitro assembly process of the 50S ribosomal subunit. It is not involved in the protein synthesizing functions of that subunit. This Phocaeicola vulgatus (strain ATCC 8482 / DSM 1447 / JCM 5826 / CCUG 4940 / NBRC 14291 / NCTC 11154) (Bacteroides vulgatus) protein is Large ribosomal subunit protein bL20.